The primary structure comprises 233 residues: Uracil-DNA glycosylase (233 aa).

Catalysis depends on Asp-70, which acts as the Proton acceptor.

It belongs to the uracil-DNA glycosylase (UDG) superfamily. UNG family.

The protein resides in the cytoplasm. It catalyses the reaction Hydrolyzes single-stranded DNA or mismatched double-stranded DNA and polynucleotides, releasing free uracil.. Excises uracil residues from the DNA which can arise as a result of misincorporation of dUMP residues by DNA polymerase or due to deamination of cytosine. The chain is Uracil-DNA glycosylase from Helicobacter pylori (strain G27).